Consider the following 259-residue polypeptide: Alpha-acetolactate decarboxylase (259 aa).

The protein belongs to the alpha-acetolactate decarboxylase family.

The catalysed reaction is (2S)-2-acetolactate + H(+) = (R)-acetoin + CO2. It participates in polyol metabolism; (R,R)-butane-2,3-diol biosynthesis; (R,R)-butane-2,3-diol from pyruvate: step 2/3. In terms of biological role, converts acetolactate into acetoin, which can be excreted by the cells. This may be a mechanism for controlling the internal pH of cells in the stationary stage. This chain is Alpha-acetolactate decarboxylase (budA), found in Raoultella terrigena (Klebsiella terrigena).